Consider the following 567-residue polypeptide: MAQTRAWKSIMPLESLPGWLNAVVWGLLLLFCQVQGQDSASPIRNTHTGQVRGSFVHVKDTKSGVHTFLGIPFAKPPIGPLRFAPPEPPEPWSGVRDGTSHPAMCLQNIDGLNLENLKIKMSRSPVSMSEDCLYLSIYTPAHTHKDSNLPVMVWIHGGGLCWGMASTYDGSMLAAIEDVVVVTIQYRLGILGFFSTGDEHARGNWGYLDQVAALRWVQQNIVHFGGNPDRVTIFGESAGGISVSSHVVSPMSQGLFHGAIMESGVALLPNLISNTSEVIYTMVANLSGCEPVDSEALMSCLREKSEEEMLAINNIVRTISGVVDGKFLPRHPLELLASVDFHPVPSIIGINSDEYGWIIPMLHPDSTMKEINRETMRAVLKNTAVQMMLPPECSDLLMEEYMGDTEDSKTLQIQFNEMMGDFIFVIPALQVAHFQRSHAPVYFYEFQHQSNFLKDIRPPHVKADHGDELPYVIGYLFWDMKFVFTEEEKLLSRKMIKYWANFARHGNPNSEGLPYWPALDHDEQYLQLDIQPVVGRALKARRLKFWTKTLPQKIQELKGSQDNHTEL.

A signal peptide spans 1 to 36; that stretch reads MAQTRAWKSIMPLESLPGWLNAVVWGLLLLFCQVQG. Glutamine 37 is subject to Pyrrolidone carboxylic acid. Cysteine 105 and cysteine 132 are disulfide-bonded. Serine 237 acts as the Acyl-ester intermediate in catalysis. A disulfide bridge connects residues cysteine 289 and cysteine 300. Active-site charge relay system residues include glutamate 354 and histidine 465.

The protein belongs to the type-B carboxylesterase/lipase family. As to expression, expressed in liver.

It is found in the microsome. It catalyses the reaction all-trans-retinyl hexadecanoate + H2O = all-trans-retinol + hexadecanoate + H(+). The catalysed reaction is (-)-trans-permethrin + H2O = (3-phenoxyphenyl)methanol + (1S,3R)-3-(2,2-dichlorovinyl)-2,2-dimethylcyclopropanecarboxylate + H(+). Carboxylesterase that catalyzes the hydrolysis of pyrethroids pesticides. Hydrolyzes trans-permethrin at a rate about 22-fold higher than cis-permethrin. Also hydrolyzes trans-cypermethrin. Hydrolyzes retinyl esters. This is Pyrethroid hydrolase Ces2e from Rattus norvegicus (Rat).